A 123-amino-acid chain; its full sequence is Protein Wnt-7 (123 aa).

S1 carries the O-palmitoleoyl serine; by PORCN lipid modification. N-linked (GlcNAc...) asparagine glycosylation is found at N79 and N90. A disulfide bridge connects residues C89 and C104.

It belongs to the Wnt family. Palmitoleoylation is required for efficient binding to frizzled receptors. Depalmitoleoylation leads to Wnt signaling pathway inhibition.

The protein resides in the secreted. It localises to the extracellular space. The protein localises to the extracellular matrix. Its function is as follows. Ligand for members of the frizzled family of seven transmembrane receptors. Probable developmental protein. May be a signaling molecule which affects the development of discrete regions of tissues. Is likely to signal over only few cell diameters. The sequence is that of Protein Wnt-7 (WNT-7) from Strongylocentrotus purpuratus (Purple sea urchin).